The sequence spans 412 residues: MVAAAASSAFFSFPTPGTSPKPGKFGNWPSSLSIPFNPKSNHNGGIQVKANASAHPKANGSAVSLKAGSLETQEDTSSPSPPPRTFISQLPDWSMLVSAITTVFVAAEKQWTMLDRKSKRPDVLVEPFVQDGVSFRQSFSIRSYEIGVDRTASIETLMNIFQETSLNHCKSLGLLNDGFGRTPEMCKRDLIWVVTKMQIEVNRYPTWGDTIEVTTWVSESGKNGMSRDWLISDCHSGEILIRATSVWAMMNQKTRRLSKIPDEVRQEIVPYFVDSAPVIEDDRKLHKLDVKTGDSIRNGLTPRWNDFDVNQHVNNVKYIAWLLKSVPTEVFETQELCGLTLEYRRECRRDSVLESVTAMDPSKEGDRSLYQHLLRLENGADIALGRTEWRPKNAGATGAVSTGKTSNGNSVS.

Over residues 1–25 the composition is skewed to low complexity; sequence MVAAAASSAFFSFPTPGTSPKPGKF. A chloroplast-targeting transit peptide spans 1–50; sequence MVAAAASSAFFSFPTPGTSPKPGKFGNWPSSLSIPFNPKSNHNGGIQVKA. The segment at 1–63 is disordered; sequence MVAAAASSAF…AHPKANGSAV (63 aa). A compositionally biased stretch (polar residues) spans 28–44; it reads WPSSLSIPFNPKSNHNG. Residues asparagine 310, histidine 312, and cysteine 347 contribute to the active site. A disordered region spans residues 393–412; sequence NAGATGAVSTGKTSNGNSVS. Over residues 399–412 the composition is skewed to polar residues; it reads AVSTGKTSNGNSVS.

It belongs to the acyl-ACP thioesterase family.

It is found in the plastid. The protein resides in the chloroplast. It catalyses the reaction tetradecanoyl-[ACP] + H2O = tetradecanoate + holo-[ACP] + H(+). In terms of biological role, plays an essential role in chain termination during de novo fatty acid synthesis. Possesses thioesterase activity for medium chain acyl-ACPs. Main substrate is 14:0. The polypeptide is Acyl-[acyl-carrier-protein] hydrolase FATB3, chloroplastic (Cuphea viscosissima (Blue waxweed)).